Consider the following 156-residue polypeptide: Small ribosomal subunit protein uS7 (156 aa).

This sequence belongs to the universal ribosomal protein uS7 family. Part of the 30S ribosomal subunit. Contacts proteins S9 and S11.

In terms of biological role, one of the primary rRNA binding proteins, it binds directly to 16S rRNA where it nucleates assembly of the head domain of the 30S subunit. Is located at the subunit interface close to the decoding center, probably blocks exit of the E-site tRNA. This Aster yellows witches'-broom phytoplasma (strain AYWB) protein is Small ribosomal subunit protein uS7.